A 321-amino-acid polypeptide reads, in one-letter code: MSAAATMPMPREASNYDEISMQQSMLFSDSLKDLKNLRTQLYSAAEYFELSYTNDEQKQIVVETLKDYAIKALVNTVDHLGSVTYKVNDFVDEKVDEVAGTELRVSCIEQRLRMCQEYMDHEGRSQQSLVIDTPKFHKRYFLPSGEIKRGGNLAKLKNVEGSFDGEDDWNQFRNAVRATIRETPPPPVRKPILQSPSQRKPQRSATFSFSSIATAPKKEQDKRAVSPHRFPLLRSGSVAIRPSSISRPTTPSKSRAVTPTPKRYPSEPRRSASVRVAFEKEAQKEPEHQQQPSKSKRLLKALLSRRKTKKDDTLYTYLDEY.

Disordered regions lie at residues 179–273 (TIRE…RSAS) and 279–298 (EKEAQKEPEHQQQPSKSKRL). Composition is skewed to low complexity over residues 204–215 (SATFSFSSIATA) and 240–255 (IRPSSISRPTTPSKSR). Basic and acidic residues predominate over residues 279–288 (EKEAQKEPEH).

It belongs to the ABI family. Binds SCAR.

The protein resides in the cytoplasm. It localises to the cytoskeleton. In terms of biological role, involved in regulation of actin and microtubule organization. Part of a WAVE complex that activates the Arp2/3 complex. The protein is Protein ABIL3 (ABIL3) of Arabidopsis thaliana (Mouse-ear cress).